We begin with the raw amino-acid sequence, 303 residues long: E3 ubiquitin-protein ligase CCNB1IP1 homolog (303 aa).

An RING-type; degenerate zinc finger spans residues 3–42 (CNACWRELEGQAVSTTCGHLLCTEDAKKILSNDAACPICD). Residues 119–184 (LEEVHTAYQK…YESAKRSAIQ (66 aa)) are a coiled coil. The interval 201–268 (VPNIMDSSDP…DIRPRQPARP (68 aa)) is disordered.

Interacts with ZIP4 and PTD. Expressed in young panicles.

The protein resides in the nucleus. It is found in the chromosome. It catalyses the reaction S-ubiquitinyl-[E2 ubiquitin-conjugating enzyme]-L-cysteine + [acceptor protein]-L-lysine = [E2 ubiquitin-conjugating enzyme]-L-cysteine + N(6)-ubiquitinyl-[acceptor protein]-L-lysine.. It participates in protein modification; protein ubiquitination. Its function is as follows. Ubiquitin E3 ligase required for class I crossover (CO) formation during meiosis. This chain is E3 ubiquitin-protein ligase CCNB1IP1 homolog, found in Oryza sativa subsp. japonica (Rice).